A 123-amino-acid chain; its full sequence is Large ribosomal subunit protein uL14 (123 aa).

It belongs to the universal ribosomal protein uL14 family. As to quaternary structure, part of the 50S ribosomal subunit. Forms a cluster with proteins L3 and L19. In the 70S ribosome, L14 and L19 interact and together make contacts with the 16S rRNA in bridges B5 and B8.

Its function is as follows. Binds to 23S rRNA. Forms part of two intersubunit bridges in the 70S ribosome. In Corynebacterium urealyticum (strain ATCC 43042 / DSM 7109), this protein is Large ribosomal subunit protein uL14.